The sequence spans 136 residues: Large ribosomal subunit protein uL16c (136 aa).

The protein belongs to the universal ribosomal protein uL16 family. Part of the 50S ribosomal subunit.

The protein localises to the plastid. It is found in the chloroplast. The chain is Large ribosomal subunit protein uL16c from Phaseolus angularis (Azuki bean).